The primary structure comprises 139 residues: Large-conductance mechanosensitive channel (139 aa).

A run of 2 helical transmembrane segments spans residues 16-36 and 83-103; these read VIDL…VDSL and GQFI…FVAV.

It belongs to the MscL family. Homopentamer.

The protein localises to the cell inner membrane. Functionally, channel that opens in response to stretch forces in the membrane lipid bilayer. May participate in the regulation of osmotic pressure changes within the cell. The polypeptide is Large-conductance mechanosensitive channel (Aromatoleum aromaticum (strain DSM 19018 / LMG 30748 / EbN1) (Azoarcus sp. (strain EbN1))).